Here is a 306-residue protein sequence, read N- to C-terminus: MLFKITFLGTSGTIPSVERNSPAIFVQFGGQRMLFDCGEGTQRQMMIAKTGFRNLDNIFITHLHTDHFIGLFGLIETMSLNERSRELNVYSPRAEVLRALFEAFGYDQLNYDIRVRELKDGEEVKFDGFKVVAFRTEHIVKSVGYAIIENDRRGKFNREKAEKELGIPPGPLYAKLARGESIVWKGRTITPDMVLGEKRRGRKVVYTGDSRPTKRTVEIARNADILIHDASFKEELKDWAIESGHSTAKEAAEVAREANVKKLILTHISTRYSKDASPLLEEAKKVFENTIIAEDFMSLEVTFDES.

Residues histidine 62, histidine 64, aspartate 66, histidine 67, histidine 138, aspartate 209, and histidine 267 each contribute to the Zn(2+) site. The active-site Proton acceptor is the aspartate 66.

Belongs to the RNase Z family. As to quaternary structure, homodimer. The cofactor is Zn(2+).

It catalyses the reaction Endonucleolytic cleavage of RNA, removing extra 3' nucleotides from tRNA precursor, generating 3' termini of tRNAs. A 3'-hydroxy group is left at the tRNA terminus and a 5'-phosphoryl group is left at the trailer molecule.. Zinc phosphodiesterase, which displays some tRNA 3'-processing endonuclease activity. Probably involved in tRNA maturation, by removing a 3'-trailer from precursor tRNA. The sequence is that of Ribonuclease Z from Archaeoglobus fulgidus (strain ATCC 49558 / DSM 4304 / JCM 9628 / NBRC 100126 / VC-16).